The primary structure comprises 468 residues: MCDLIEPQPAEKIGKMKKLRRTLSESFSRIVLNVISFVFQICVTKMSTRNCQGMDSVIKPLDTIPEDKKVRVQRTQSTFDPFEKPTNQVKRVHSENNACINFKSSSAGKESPKVRRHSSPSSPTSPKFGKADSYEKLEKLGEGSYATVYKGKSKVNGKLVALKVIRLQEEEGTPFTAIREASLLKGLKHANIVLLHDIIHTKETLTLVFEYVHTDLCQYMDKHPGGLHPENVKLFLFQLLRGLSYIHQRYILHRDLKPQNLLISDTGELKLADFGLARAKSVPSHTYSNEVVTLWYRPPDVLLGSTEYSTCLDMWGVGCIFVEMIQGVAAFPGMKDIQDQLERIFLVLGTPNEDTWPGVHSLPHFKPERFTLYSSKNLRQAWNKLSYVNHAEDLASKLLQCSPKNRLSAQAALSHEYFSDLPPRLWELTDMSSIFTVPNVRLQPESGESMRAFGKNSSYGKSLSNSKH.

S24, S77, and S94 each carry phosphoserine. Positions 102-131 (FKSSSAGKESPKVRRHSSPSSPTSPKFGKA) are disordered. S133 bears the Phosphoserine mark. One can recognise a Protein kinase domain in the interval 134–418 (YEKLEKLGEG…AQAALSHEYF (285 aa)). ATP contacts are provided by residues 140 to 148 (LGEGSYATV) and K163. D255 acts as the Proton acceptor in catalysis. The tract at residues 448 to 468 (ESMRAFGKNSSYGKSLSNSKH) is disordered. Residues 455-468 (KNSSYGKSLSNSKH) are compositionally biased toward polar residues.

Belongs to the protein kinase superfamily. CMGC Ser/Thr protein kinase family. CDC2/CDKX subfamily. In terms of assembly, found in a complex with LRP6, CCNY and CAPRIN2 during G2/M stage; CAPRIN2 functions as a scaffold for the complex by binding to CCNY via its N terminus and to CDK14 via its C terminus. Interacts with CCNY; CCNY mediates its recruitment to the plasma membrane and promotes phosphorylation of LRP6. Interacts with CCDN3 and CDKN1A. Interacts with SEPT8. Interacts with 14-3-3 proteina YWHAB, YWHAE, YWHAH and YWHAQ.

The protein localises to the cell membrane. It localises to the cytoplasm. The protein resides in the nucleus. The catalysed reaction is L-seryl-[protein] + ATP = O-phospho-L-seryl-[protein] + ADP + H(+). It catalyses the reaction L-threonyl-[protein] + ATP = O-phospho-L-threonyl-[protein] + ADP + H(+). Its activity is regulated as follows. Serine/threonine-protein kinase activity is promoted by associated cyclins CCDN3 and CCNY and repressed by CDKN1A. Serine/threonine-protein kinase involved in the control of the eukaryotic cell cycle, whose activity is controlled by an associated cyclin. Acts as a cell-cycle regulator of Wnt signaling pathway during G2/M phase by mediating the phosphorylation of LRP6 at 'Ser-1490', leading to the activation of the Wnt signaling pathway. Acts as a regulator of cell cycle progression and cell proliferation via its interaction with CCDN3. Phosphorylates RB1 in vitro, however the relevance of such result remains to be confirmed in vivo. May also play a role in meiosis, neuron differentiation and may indirectly act as a negative regulator of insulin-responsive glucose transport. The sequence is that of Cyclin-dependent kinase 14 (CDK14) from Oryctolagus cuniculus (Rabbit).